Reading from the N-terminus, the 510-residue chain is NAD(P)H-quinone oxidoreductase subunit 2 B, chloroplastic (510 aa).

Helical transmembrane passes span 24–44, 57–77, 99–119, 124–144, 149–169, 183–203, 227–247, 295–315, 323–343, 347–367, 395–415, 418–438, and 482–502; these read LLLF…GLIL, IPWL…ALLF, IFQF…VEYI, MAIT…MFLC, LITI…LSGY, YLLM…WLYG, PGIS…LSPA, WHLL…LIAI, MLAY…IVGD, GYAS…GTFA, ALSL…AGFF, LHLF…IGLL, and LSMI…NPII.

This sequence belongs to the complex I subunit 2 family. In terms of assembly, NDH is composed of at least 16 different subunits, 5 of which are encoded in the nucleus.

Its subcellular location is the plastid. The protein resides in the chloroplast thylakoid membrane. The enzyme catalyses a plastoquinone + NADH + (n+1) H(+)(in) = a plastoquinol + NAD(+) + n H(+)(out). The catalysed reaction is a plastoquinone + NADPH + (n+1) H(+)(in) = a plastoquinol + NADP(+) + n H(+)(out). In terms of biological role, NDH shuttles electrons from NAD(P)H:plastoquinone, via FMN and iron-sulfur (Fe-S) centers, to quinones in the photosynthetic chain and possibly in a chloroplast respiratory chain. The immediate electron acceptor for the enzyme in this species is believed to be plastoquinone. Couples the redox reaction to proton translocation, and thus conserves the redox energy in a proton gradient. The chain is NAD(P)H-quinone oxidoreductase subunit 2 B, chloroplastic from Cucumis sativus (Cucumber).